The chain runs to 490 residues: Coagulation factor X (490 aa).

Residues 1–20 (MANPLHLVLLGAALAGLLLS) form the signal peptide. Residues 21–40 (GSSVFISRRAANDVLARTRR) constitute a propeptide that is removed on maturation. The Gla domain occupies 41-85 (ANSFLEELKKGNLERECMEENCSYEEALEVFEDREKTNEFWNKYV). 6 positions are modified to 4-carboxyglutamate: Glu-46, Glu-47, Glu-54, Glu-56, Glu-59, and Glu-60. Cys-57 and Cys-62 are disulfide-bonded. Asn-61 carries an N-linked (GlcNAc...) asparagine glycan. A 4-carboxyglutamate mark is found at Glu-65, Glu-66, Glu-69, Glu-72, Glu-75, and Glu-79. Residues 86–122 (DGDQCESNPCQNQGTCKDGLGMYTCSCVEGYEGQDCE) enclose the EGF-like 1; calcium-binding domain. 11 disulfides stabilise this stretch: Cys-90–Cys-101, Cys-95–Cys-110, Cys-112–Cys-121, Cys-129–Cys-140, Cys-136–Cys-149, Cys-151–Cys-164, Cys-172–Cys-340, Cys-239–Cys-244, Cys-259–Cys-275, Cys-388–Cys-402, and Cys-413–Cys-441. Asp-103 is modified ((3R)-3-hydroxyaspartate). One can recognise an EGF-like 2 domain in the interval 125–165 (TRKLCSLDNGGCDQFCKEEENSVLCSCASGYTLGDNGKSCI). Residues 183–230 (SPATNSSEGPPEAPGPEQQDDGNLTATENPFNLLDSPEPPPEDDSSSL) are disordered. A propeptide spans 184–232 (PATNSSEGPPEAPGPEQQDDGNLTATENPFNLLDSPEPPPEDDSSSLVR) (activation peptide). N-linked (GlcNAc...) asparagine glycans are attached at residues Asn-187 and Asn-205. Polar residues predominate over residues 203-212 (DGNLTATENP). The Peptidase S1 domain maps to 233–465 (IVGGQDCRDG…FLKWIEKSMR (233 aa)). Catalysis depends on charge relay system residues His-274 and Asp-320. Residue Ser-417 is the Charge relay system of the active site.

The protein belongs to the peptidase S1 family. In terms of assembly, the two chains are formed from a single-chain precursor by the excision of two Arg residues and are held together by 1 or more disulfide bonds. Forms a heterodimer with SERPINA5. The vitamin K-dependent, enzymatic carboxylation of some glutamate residues allows the modified protein to bind calcium. Post-translationally, N- and O-glycosylated. In terms of processing, proteolytically cleaved and activated by cathepsin CTSG. The activation peptide is cleaved by factor IXa (in the intrinsic pathway), or by factor VIIa (in the extrinsic pathway). The iron and 2-oxoglutarate dependent 3-hydroxylation of aspartate and asparagine is (R) stereospecific within EGF domains.

The protein resides in the secreted. The catalysed reaction is Selective cleavage of Arg-|-Thr and then Arg-|-Ile bonds in prothrombin to form thrombin.. Inhibited by SERPINA5. Its function is as follows. Factor Xa is a vitamin K-dependent glycoprotein that converts prothrombin to thrombin in the presence of factor Va, calcium and phospholipid during blood clotting. Factor Xa activates pro-inflammatory signaling pathways in a protease-activated receptor (PAR)-dependent manner. This Oryctolagus cuniculus (Rabbit) protein is Coagulation factor X (F10).